The sequence spans 277 residues: NH(3)-dependent NAD(+) synthetase (277 aa).

Position 36–43 (36–43) interacts with ATP; that stretch reads GLSGGIDS. Residue Asp-42 coordinates Mg(2+). Arg-118 is a deamido-NAD(+) binding site. Thr-138 lines the ATP pocket. Residue Glu-143 coordinates Mg(2+). Residues Lys-167 and Ser-189 each coordinate ATP.

This sequence belongs to the NAD synthetase family. In terms of assembly, homodimer.

It carries out the reaction deamido-NAD(+) + NH4(+) + ATP = AMP + diphosphate + NAD(+) + H(+). It participates in cofactor biosynthesis; NAD(+) biosynthesis; NAD(+) from deamido-NAD(+) (ammonia route): step 1/1. Functionally, catalyzes the ATP-dependent amidation of deamido-NAD to form NAD. Uses ammonia as a nitrogen source. In Chlorobaculum parvum (strain DSM 263 / NCIMB 8327) (Chlorobium vibrioforme subsp. thiosulfatophilum), this protein is NH(3)-dependent NAD(+) synthetase.